A 95-amino-acid polypeptide reads, in one-letter code: Protein TusB (95 aa).

It belongs to the DsrH/TusB family. In terms of assembly, heterohexamer, formed by a dimer of trimers. The hexameric TusBCD complex contains 2 copies each of TusB, TusC and TusD. The TusBCD complex interacts with TusE.

Its subcellular location is the cytoplasm. Its function is as follows. Part of a sulfur-relay system required for 2-thiolation of 5-methylaminomethyl-2-thiouridine (mnm(5)s(2)U) at tRNA wobble positions. The chain is Protein TusB from Escherichia fergusonii (strain ATCC 35469 / DSM 13698 / CCUG 18766 / IAM 14443 / JCM 21226 / LMG 7866 / NBRC 102419 / NCTC 12128 / CDC 0568-73).